Reading from the N-terminus, the 1135-residue chain is Protocadherin-18 (1135 aa).

Positions 1 to 27 (MHQMNAKMHFRFVFALLIVSFNHDVLG) are cleaved as a signal peptide. 6 consecutive Cadherin domains span residues 28 to 137 (KNLK…SPQF), 138 to 246 (SRSL…SPAF), 247 to 354 (EQQS…KPEI), 361 to 465 (PGKE…PPHF), 466 to 576 (QRSR…VPVV), and 582 to 688 (RNNT…STAM). Topologically, residues 28–699 (KNLKYRIYEE…SVSQASLDVS (672 aa)) are extracellular. The N-linked (GlcNAc...) asparagine glycan is linked to Asn-103. N-linked (GlcNAc...) asparagine glycans are attached at residues Asn-269, Asn-420, Asn-559, Asn-583, and Asn-641. The chain crosses the membrane as a helical span at residues 700–720 (MIIIISLGAICAVLLVIMVLF). Topologically, residues 721–1135 (ATRCNREKKD…NKLLQDVRQS (415 aa)) are cytoplasmic. 4 disordered regions span residues 769-800 (LPIRSHHRSSPSSSPTLERGQMGSRQSHNSHQ), 869-889 (SLKDSGRGDSEAGDSDYDLGR), 942-1003 (DYRS…STSS), and 1023-1046 (YSECSEVDRSNSLERRKGPLPAKT). Polar residues predominate over residues 791–800 (GSRQSHNSHQ). Residues 869–878 (SLKDSGRGDS) are compositionally biased toward basic and acidic residues. Positions 893–1135 (IDRLLGEGFS…NKLLQDVRQS (243 aa)) are interaction with DAB1. Residues 1028–1039 (EVDRSNSLERRK) are compositionally biased toward basic and acidic residues.

Interacts with DAB1. Expressed in all tissues, with highest expression in lung and ovary.

It localises to the cell membrane. Potential calcium-dependent cell-adhesion protein. The polypeptide is Protocadherin-18 (PCDH18) (Homo sapiens (Human)).